The following is an 89-amino-acid chain: Small ribosomal subunit protein uS15 (89 aa).

The protein belongs to the universal ribosomal protein uS15 family. In terms of assembly, part of the 30S ribosomal subunit. Forms a bridge to the 50S subunit in the 70S ribosome, contacting the 23S rRNA.

One of the primary rRNA binding proteins, it binds directly to 16S rRNA where it helps nucleate assembly of the platform of the 30S subunit by binding and bridging several RNA helices of the 16S rRNA. Its function is as follows. Forms an intersubunit bridge (bridge B4) with the 23S rRNA of the 50S subunit in the ribosome. This is Small ribosomal subunit protein uS15 from Oenococcus oeni (strain ATCC BAA-331 / PSU-1).